Consider the following 127-residue polypeptide: UPF0325 protein ASA_3165 (127 aa).

Belongs to the UPF0325 family.

The protein is UPF0325 protein ASA_3165 of Aeromonas salmonicida (strain A449).